The sequence spans 429 residues: 3-phosphoshikimate 1-carboxyvinyltransferase (429 aa).

Residues K23, S24, and R28 each contribute to the 3-phosphoshikimate site. K23 lines the phosphoenolpyruvate pocket. Phosphoenolpyruvate contacts are provided by G95 and R123. 3-phosphoshikimate-binding residues include S168, Q170, D316, and K343. Q170 is a binding site for phosphoenolpyruvate. The Proton acceptor role is filled by D316. R347 and R389 together coordinate phosphoenolpyruvate.

This sequence belongs to the EPSP synthase family. As to quaternary structure, monomer.

Its subcellular location is the cytoplasm. It catalyses the reaction 3-phosphoshikimate + phosphoenolpyruvate = 5-O-(1-carboxyvinyl)-3-phosphoshikimate + phosphate. It functions in the pathway metabolic intermediate biosynthesis; chorismate biosynthesis; chorismate from D-erythrose 4-phosphate and phosphoenolpyruvate: step 6/7. In terms of biological role, catalyzes the transfer of the enolpyruvyl moiety of phosphoenolpyruvate (PEP) to the 5-hydroxyl of shikimate-3-phosphate (S3P) to produce enolpyruvyl shikimate-3-phosphate and inorganic phosphate. In Bacillus anthracis (strain A0248), this protein is 3-phosphoshikimate 1-carboxyvinyltransferase.